The sequence spans 181 residues: TATA-box-binding protein (181 aa).

A run of 2 repeats spans residues 7–83 (IVNV…IKEL) and 98–173 (VQNM…LTTL).

Belongs to the TBP family.

Its function is as follows. General factor that plays a role in the activation of archaeal genes transcribed by RNA polymerase. Binds specifically to the TATA box promoter element which lies close to the position of transcription initiation. This Methanococcus maripaludis (strain C7 / ATCC BAA-1331) protein is TATA-box-binding protein.